Consider the following 1201-residue polypeptide: Kinesin-like protein costa (1201 aa).

Residues Pro4–Val391 enclose the Kinesin motor domain. The segment at Ser23 to Tyr92 is disordered. Residues Glu28–Asn56 are compositionally biased toward basic and acidic residues. Residues Pro57 to Asp75 show a composition bias toward polar residues. Gly175–Ser182 is an ATP binding site. Disordered stretches follow at residues Ala502 to Asp536, His565 to Leu606, and Ala618 to Ser639. The span at Ser510 to Asp521 shows a compositional bias: low complexity. Ser599 and Ser605 each carry phosphoserine. 2 coiled-coil regions span residues Ala652–Lys821 and Thr968–Leu1001.

Belongs to the TRAFAC class myosin-kinesin ATPase superfamily. Kinesin family. KIF27 subfamily. As to quaternary structure, homodimer (Potential). Binds microtubules. Interacts with ci, smo, sgg, CkIalpha and protein kinase A catalytic subunit. Interacts (via kinesin motor domain) with Ubr3. Polyubiquitinated by Ubr3, which leads to proteasomal degradation.

Its subcellular location is the cytoplasm. The protein localises to the cytoskeleton. Its function is as follows. Regulates cubitus interruptus (ci) processing by recruiting multiple kinases to promote its efficient phosphorylation. Scaffolds multiple kinases and ci into proximity to promote its hyperphosphorylation, which then targets it for SCFSlimb/proteasome-mediated processing to generate its repressor form. Hh signaling inhibits ci phosphorylation by interfering with the cos-ci-kinases complex formation. Negatively regulates hh-signaling pathways during various processes, including photoreceptor differentiation. May negatively regulate a hh-signaling pathway which functions in the intestinal immune response to bacterial uracil by activating the Duox-dependent production of reactive oxygen species (ROS). The sequence is that of Kinesin-like protein costa (cos) from Drosophila melanogaster (Fruit fly).